A 386-amino-acid polypeptide reads, in one-letter code: MNLHEYQSKQIFAQYDLPVSKGYPCETVEQALKAIEKLGGDQWVAKCQVYAGGRGKAGGVKVVSSEAEVRSFFERFLGKRLVTLQTDAQGQPVNTIYLEACAAVKKELYVGMVIDRANRRIVFMASTEGGVNIEEVAEKTPHLLHKVAIDPFMGAQPFQGRELACKLGLTGKQIHQFAHIFCRLSKMFSEKDLSLVEINPLVILQNDDLHCLDAKIVVDGNALYRHADLKSLQDPSQEDPREAEAEALGLNYVALDGNIGCMVNGAGLAMGTMDIIKLQGGLPANFLDVGGSATKERVAGAFKIILSDTNVKAILVNIFGGIVRCDLIAEGIVAAVNEVGVTVPVVVRLEGNNAERGREILAQSGLNIIAAESLKDAAVQAVNAAK.

ATP is bound by residues lysine 46, 53–55, glutamate 99, alanine 102, and glutamate 107; that span reads GRG. Asparagine 199 and aspartate 213 together coordinate Mg(2+). Substrate contacts are provided by residues asparagine 264 and 321–323; that span reads GIV.

Belongs to the succinate/malate CoA ligase beta subunit family. In terms of assembly, heterotetramer of two alpha and two beta subunits. Mg(2+) serves as cofactor.

The catalysed reaction is succinate + ATP + CoA = succinyl-CoA + ADP + phosphate. The enzyme catalyses GTP + succinate + CoA = succinyl-CoA + GDP + phosphate. The protein operates within carbohydrate metabolism; tricarboxylic acid cycle; succinate from succinyl-CoA (ligase route): step 1/1. Its function is as follows. Succinyl-CoA synthetase functions in the citric acid cycle (TCA), coupling the hydrolysis of succinyl-CoA to the synthesis of either ATP or GTP and thus represents the only step of substrate-level phosphorylation in the TCA. The beta subunit provides nucleotide specificity of the enzyme and binds the substrate succinate, while the binding sites for coenzyme A and phosphate are found in the alpha subunit. The protein is Succinate--CoA ligase [ADP-forming] subunit beta of Actinobacillus succinogenes (strain ATCC 55618 / DSM 22257 / CCUG 43843 / 130Z).